Here is a 63-residue protein sequence, read N- to C-terminus: Large ribosomal subunit protein bL35 (63 aa).

This sequence belongs to the bacterial ribosomal protein bL35 family.

This Campylobacter concisus (strain 13826) protein is Large ribosomal subunit protein bL35.